A 305-amino-acid polypeptide reads, in one-letter code: Ribonuclease BN (305 aa).

Residues H64, H66, D68, H69, H141, D212, and H270 each coordinate Zn(2+). The active-site Proton acceptor is D68.

Belongs to the RNase Z family. RNase BN subfamily. In terms of assembly, homodimer. Zn(2+) serves as cofactor.

Zinc phosphodiesterase, which has both exoribonuclease and endoribonuclease activities. The sequence is that of Ribonuclease BN from Escherichia coli O139:H28 (strain E24377A / ETEC).